Here is a 366-residue protein sequence, read N- to C-terminus: L-idonate 5-dehydrogenase (366 aa).

The Zn(2+) site is built by Cys-56, His-81, Cys-111, Cys-114, Cys-117, Cys-125, and Glu-167.

Belongs to the zinc-containing alcohol dehydrogenase family. Zn(2+) is required as a cofactor.

The enzyme catalyses L-idonate + NAD(+) = 5-dehydro-D-gluconate + NADH + H(+). Its pathway is carbohydrate acid metabolism; L-idonate degradation. Functionally, involved in the catabolism of ascorbate to tartrate. The enzyme has no activity with NADP(+). The sequence is that of L-idonate 5-dehydrogenase from Vitis vinifera (Grape).